We begin with the raw amino-acid sequence, 428 residues long: Trigger factor (428 aa).

One can recognise a PPIase FKBP-type domain in the interval G163–P248.

It belongs to the FKBP-type PPIase family. Tig subfamily.

It localises to the cytoplasm. It catalyses the reaction [protein]-peptidylproline (omega=180) = [protein]-peptidylproline (omega=0). In terms of biological role, involved in protein export. Acts as a chaperone by maintaining the newly synthesized protein in an open conformation. Functions as a peptidyl-prolyl cis-trans isomerase. The protein is Trigger factor of Anoxybacillus flavithermus (strain DSM 21510 / WK1).